A 230-amino-acid chain; its full sequence is Ureidoacrylate amidohydrolase RutB (230 aa).

D24 (proton acceptor) is an active-site residue. K133 is an active-site residue. The Nucleophile role is filled by C166.

This sequence belongs to the isochorismatase family. RutB subfamily.

It catalyses the reaction (Z)-3-ureidoacrylate + H2O + H(+) = (Z)-3-aminoacrylate + NH4(+) + CO2. It carries out the reaction (Z)-3-ureidoacrylate + H2O = (Z)-3-aminoacrylate + carbamate + H(+). The catalysed reaction is (Z)-2-methylureidoacrylate + H2O + H(+) = (Z)-2-methylaminoacrylate + NH4(+) + CO2. Hydrolyzes ureidoacrylate to form aminoacrylate and carbamate. The carbamate hydrolyzes spontaneously, thereby releasing one of the nitrogen atoms of the pyrimidine ring as ammonia and one of its carbon atoms as CO2. This Escherichia coli O6:K15:H31 (strain 536 / UPEC) protein is Ureidoacrylate amidohydrolase RutB.